The primary structure comprises 565 residues: Putative ribonucleoside-diphosphate reductase large subunit (565 aa).

Residues Ser-60, 74–75, Gly-103, 256–260, and 400–404 contribute to the substrate site; these read SC, NLCNE, and PNANS. An intrachain disulfide couples Cys-75 to Cys-273. Asn-256 acts as the Proton acceptor in catalysis. Residue Cys-258 is the Cysteine radical intermediate of the active site. Catalysis depends on Glu-260, which acts as the Proton acceptor.

This sequence belongs to the ribonucleoside diphosphate reductase large chain family. In terms of assembly, heterotetramer composed of a homodimer of the large subunit (R1) and a homodimer of the small subunit (R2). Larger multisubunit protein complex are also active, composed of (R1)n(R2)n.

The catalysed reaction is a 2'-deoxyribonucleoside 5'-diphosphate + [thioredoxin]-disulfide + H2O = a ribonucleoside 5'-diphosphate + [thioredoxin]-dithiol. Its activity is regulated as follows. Under complex allosteric control mediated by deoxynucleoside triphosphates and ATP binding. The type of nucleotide bound at the specificity site determines substrate preference. It seems probable that ATP makes the enzyme reduce CDP and UDP, dGTP favors ADP reduction and dTTP favors GDP reduction. Its function is as follows. Ribonucleoside-diphosphate reductase holoenzyme provides the precursors necessary for viral DNA synthesis. Allows virus growth in non-dividing cells. Catalyzes the biosynthesis of deoxyribonucleotides from the corresponding ribonucleotides. This chain is Putative ribonucleoside-diphosphate reductase large subunit, found in Frog virus 3 (isolate Goorha) (FV-3).